The sequence spans 433 residues: MIGGLFIYNHKGEVLISRVYRDDIGRNAVDAFRVNVIHARQQVRSPVTNIARTSFFHVKRSNIWLAAVTKQNVNAAMVFEFLYKMCDVMTAYFGKISEENIKNNFVLIYELLDEILDFGYPQNSETGALKTFITQQGIKSQTKEEQSQITSQVTGQIGWRREGIKYRRNELFLDVLESVNLLMSPQGQVLSAHVSGRVVMKSYLSGMPECKFGMNDKIVIEKQGKGTADETGKSGKQSIAIDDCTFHQCVRLSKFDSERSISFIPPDGEFELMRYRTTKDIILPFRVIPLVREVGRTKLEVKVVIKSNFKPSLLAQKIEVRIPTPLNTSGVQVICMKGKAKYKASENAIVWKIKRMAGMKESQISAEIELLPTNDKKKWARPPISMNFEVPFAPSGLKVRYLKVFEPKLNYSDHDVIKWVRYIGRSGIYETRC.

The MHD domain maps to 168–432 (RNELFLDVLE…IGRSGIYETR (265 aa)). A 1,2-diacyl-sn-glycero-3-phospho-(1D-myo-inositol-3,4,5-trisphosphate)-binding residues include K339, K343, and K352.

Belongs to the adaptor complexes medium subunit family. In terms of assembly, adaptor protein complex 2 (AP-2) is a heterotetramer composed of two large adaptins (alpha-type subunit and beta-type subunit), a medium adaptin (mu-type subunit) and a small adaptin (sigma-type subunit).

Its subcellular location is the cell membrane. The protein resides in the membrane. It is found in the coated pit. In terms of biological role, component of the adaptor complexes which link clathrin to receptors in coated vesicles. Clathrin-associated protein complexes are believed to interact with the cytoplasmic tails of membrane proteins, leading to their selection and concentration. AP50 is a subunit of the plasma membrane adaptor. The complex binds polyphosphoinositide-containing lipids. This is AP-2 complex subunit mu (AP2M1) from Gallus gallus (Chicken).